Consider the following 385-residue polypeptide: MTWQQRIERALDERQQTDAFRRRLPVSHGAGRWLEREGERWLNFSSNDYLGLSQHAGIIAAWQQGAERYGVGSGGSGHVSGYSEAHRALEEELADWLGYPRALLFISGFAANQALVAALAEKEDRIVADRLSHASLLEAASLSPAQLRRFAHNDPQQLAQLLAKPLDGLQLVVTEGIFSMDGDSAPLADIQAAARSAGALLLVDDAHGIGAIGDEGRGSCHTQAVRPELLVVTFGKAFGVSGAAVLCSESMADYLLQFARHLIYSTAMPPAQAVALSAALRVIRSDEGQQRRETLAARIRQFRAGMGDVSLGLTDSVSAIQPLIVGDNARALSLACRLREAGCWATAIRPPTVPVGSARLRLTLTAAHQAEDINRLLEALHGHGE.

Substrate is bound at residue arginine 21. Residue 108 to 109 coordinates pyridoxal 5'-phosphate; it reads GF. Histidine 133 is a binding site for substrate. Positions 179, 207, and 233 each coordinate pyridoxal 5'-phosphate. Position 236 is an N6-(pyridoxal phosphate)lysine (lysine 236). Residue threonine 352 coordinates substrate.

It belongs to the class-II pyridoxal-phosphate-dependent aminotransferase family. BioF subfamily. In terms of assembly, homodimer. Requires pyridoxal 5'-phosphate as cofactor.

It catalyses the reaction 6-carboxyhexanoyl-[ACP] + L-alanine + H(+) = (8S)-8-amino-7-oxononanoate + holo-[ACP] + CO2. It functions in the pathway cofactor biosynthesis; biotin biosynthesis. In terms of biological role, catalyzes the decarboxylative condensation of pimeloyl-[acyl-carrier protein] and L-alanine to produce 8-amino-7-oxononanoate (AON), [acyl-carrier protein], and carbon dioxide. This is 8-amino-7-oxononanoate synthase from Klebsiella pneumoniae (strain 342).